A 464-amino-acid polypeptide reads, in one-letter code: Probable LL-diaminopimelate aminotransferase, chloroplastic (464 aa).

A chloroplast-targeting transit peptide spans 1–39; that stretch reads MAASPAAGAAAATVSSFVSPSSFSSVKASKPDRLRPARR. Position 102 (glycine 102) interacts with substrate. Tyrosine 132 contacts pyridoxal 5'-phosphate. Residues glutamate 135, lysine 167, tyrosine 190, and asparagine 247 each contribute to the substrate site. Asparagine 247, aspartate 275, tyrosine 278, serine 305, and serine 307 together coordinate pyridoxal 5'-phosphate. Lysine 308 bears the N6-(pyridoxal phosphate)lysine mark. Arginine 316 provides a ligand contact to pyridoxal 5'-phosphate. Substrate contacts are provided by asparagine 347 and arginine 442.

It belongs to the class-I pyridoxal-phosphate-dependent aminotransferase family. LL-diaminopimelate aminotransferase subfamily. As to quaternary structure, homodimer. Requires pyridoxal 5'-phosphate as cofactor.

Its subcellular location is the plastid. It is found in the chloroplast. It catalyses the reaction (2S,6S)-2,6-diaminopimelate + 2-oxoglutarate = (S)-2,3,4,5-tetrahydrodipicolinate + L-glutamate + H2O + H(+). Its pathway is amino-acid biosynthesis; L-lysine biosynthesis via DAP pathway; LL-2,6-diaminopimelate from (S)-tetrahydrodipicolinate (aminotransferase route): step 1/1. In terms of biological role, required for lysine biosynthesis. Catalyzes the direct conversion of tetrahydrodipicolinate to LL-diaminopimelate, a reaction that requires three enzymes in E.coli. The sequence is that of Probable LL-diaminopimelate aminotransferase, chloroplastic (AGD2) from Oryza sativa subsp. japonica (Rice).